The sequence spans 246 residues: Proteasome subunit alpha type-6 (246 aa).

It belongs to the peptidase T1A family. As to quaternary structure, the 26S proteasome consists of a 20S proteasome core and two 19S regulatory subunits. The 20S proteasome core is composed of 28 subunits that are arranged in four stacked rings, resulting in a barrel-shaped structure. The two end rings are each formed by seven alpha subunits, and the two central rings are each formed by seven beta subunits. The catalytic chamber with the active sites is on the inside of the barrel.

It is found in the cytoplasm. Its subcellular location is the nucleus. The proteasome is a multicatalytic proteinase complex which is characterized by its ability to cleave peptides with Arg, Phe, Tyr, Leu, and Glu adjacent to the leaving group at neutral or slightly basic pH. The proteasome has an ATP-dependent proteolytic activity. The protein is Proteasome subunit alpha type-6 (PAA1) of Oryza sativa subsp. japonica (Rice).